Consider the following 332-residue polypeptide: Protein EXORDIUM-like 6 (332 aa).

The first 27 residues, 1-27 (MAMASASSSSSSISVIIFLLLAPLCLS), serve as a signal peptide directing secretion. 3 N-linked (GlcNAc...) asparagine glycosylation sites follow: asparagine 36, asparagine 102, and asparagine 143.

It belongs to the EXORDIUM family.

The protein localises to the secreted. Its subcellular location is the extracellular space. The protein resides in the apoplast. Functionally, may play a role in a brassinosteroid-dependent regulation of growth and development. This is Protein EXORDIUM-like 6 (EXL6) from Arabidopsis thaliana (Mouse-ear cress).